The following is a 143-amino-acid chain: Peptidyl-prolyl cis-trans isomerase FKBP15-3 (143 aa).

Positions 56–143 (GKRVSVHYTG…VFDVELLNVK (88 aa)) constitute a PPIase FKBP-type domain.

Belongs to the FKBP-type PPIase family.

The enzyme catalyses [protein]-peptidylproline (omega=180) = [protein]-peptidylproline (omega=0). In terms of biological role, PPIases accelerate the folding of proteins. It catalyzes the cis-trans isomerization of proline imidic peptide bonds in oligopeptides. This is Peptidyl-prolyl cis-trans isomerase FKBP15-3 (FKBP15-3) from Arabidopsis thaliana (Mouse-ear cress).